The primary structure comprises 261 residues: Probable pectin methylesterase CGR2 (261 aa).

Topologically, residues 1–35 are cytoplasmic; that stretch reads MARRQVGSTRRVGDGGSFPFAGALHSKSRSSPLLS. Residues 36-56 traverse the membrane as a helical segment; sequence ICLVLVGACLLIGYAYSGPGI. The Lumenal segment spans residues 57–261; it reads FKSIKEVSKV…CQVFHLKPLH (205 aa). N-linked (GlcNAc...) asparagine glycosylation occurs at asparagine 174.

This sequence belongs to the class I-like SAM-binding methyltransferase superfamily.

The protein localises to the golgi apparatus membrane. Together with CGR3, required for homogalacturonan pectins (HG) methylesterification in the Golgi apparatus prior to integration into cell walls, essential for general growth and development. Promotes rosette growth. Impacts carbon (C) partitioning, photosynthesis and respiration efficiency by influencing leaf mesophyll cell walls morphology and physiology; pectin methylesterification modulates both expansion and positioning of cells in leaves, probably by changing cell walls plasticity. This is Probable pectin methylesterase CGR2 from Arabidopsis thaliana (Mouse-ear cress).